The sequence spans 276 residues: MGLKRFKPVTPGRRFMVISDFSDITKTEPEKSLLAPLKKTGGRNHHGRVTVRHRGGGHKRRYRIIDFKRYDKAGIPAKVLAIEYDPNRSARIALLLYADGEKRYILAPKGVNVGDTLMSGPDAEIRPGNALPLEKIPVGTLVHNVEFTPGKGGQIARAAGTYCQIMAKEGNYALLRMPSGELRKVHIKCYATVGVVGNEDHKNEVHGKAGRVRWLGRRPHVRGVAMNPVDHPHGGGEGRGKGHHPTSPWGLPTKGYKTRRGKRPSDKFIVRRRNEV.

The disordered stretch occupies residues glycine 223 to valine 276. Basic and acidic residues-rich tracts occupy residues aspartate 230–glycine 240 and arginine 263–valine 276.

This sequence belongs to the universal ribosomal protein uL2 family. As to quaternary structure, part of the 50S ribosomal subunit. Forms a bridge to the 30S subunit in the 70S ribosome.

One of the primary rRNA binding proteins. Required for association of the 30S and 50S subunits to form the 70S ribosome, for tRNA binding and peptide bond formation. It has been suggested to have peptidyltransferase activity; this is somewhat controversial. Makes several contacts with the 16S rRNA in the 70S ribosome. This is Large ribosomal subunit protein uL2 from Thermotoga maritima (strain ATCC 43589 / DSM 3109 / JCM 10099 / NBRC 100826 / MSB8).